We begin with the raw amino-acid sequence, 96 residues long: Myticin-B (96 aa).

The signal sequence occupies residues M1–A20. Positions V61–L96 are cleaved as a propeptide — removed in mature form.

In terms of processing, contains four disulfide bonds. Hemocytes.

The protein resides in the secreted. Bacteriolytic activity against Gram-positive bacteria M.luteus, B.megaterium and A.viridans and Gram-negative bacteria E.coli D31. Possesses antifungal activity against F.oxysporum. The chain is Myticin-B from Mytilus galloprovincialis (Mediterranean mussel).